The following is a 127-amino-acid chain: Large ribosomal subunit protein uL22c (127 aa).

It belongs to the universal ribosomal protein uL22 family. As to quaternary structure, part of the 50S ribosomal subunit.

It localises to the plastid. The protein resides in the chloroplast. In terms of biological role, this protein binds specifically to 23S rRNA. Its function is as follows. The globular domain of the protein is located near the polypeptide exit tunnel on the outside of the subunit, while an extended beta-hairpin is found that lines the wall of the exit tunnel in the center of the 70S ribosome. In Acorus calamus var. americanus (American sweet flag), this protein is Large ribosomal subunit protein uL22c (rpl22).